A 452-amino-acid polypeptide reads, in one-letter code: Tubulin alpha-1 chain (452 aa).

A GTP-binding site is contributed by Gln-11. Residue Lys-40 is modified to N6-acetyllysine. Residues Glu-71, Gly-144, Thr-145, Thr-179, Asn-206, and Asn-228 each contribute to the GTP site. Position 71 (Glu-71) interacts with Mg(2+). Glu-254 is a catalytic residue. Residues 430 to 452 (KDYEEVGAESGDGDDDGLGEEEY) form a disordered region. The span at 431-452 (DYEEVGAESGDGDDDGLGEEEY) shows a compositional bias: acidic residues.

Belongs to the tubulin family. In terms of assembly, dimer of alpha and beta chains. A typical microtubule is a hollow water-filled tube with an outer diameter of 25 nm and an inner diameter of 15 nM. Alpha-beta heterodimers associate head-to-tail to form protofilaments running lengthwise along the microtubule wall with the beta-tubulin subunit facing the microtubule plus end conferring a structural polarity. Microtubules usually have 13 protofilaments but different protofilament numbers can be found in some organisms and specialized cells. The cofactor is Mg(2+). Undergoes a tyrosination/detyrosination cycle, the cyclic removal and re-addition of a C-terminal tyrosine residue by the enzymes tubulin tyrosine carboxypeptidase (TTCP) and tubulin tyrosine ligase (TTL), respectively. Post-translationally, acetylation of alpha chains at Lys-40 stabilizes microtubules and affects affinity and processivity of microtubule motors. This modification has a role in multiple cellular functions, ranging from cell motility, cell cycle progression or cell differentiation to intracellular trafficking and signaling.

The protein localises to the cytoplasm. It localises to the cytoskeleton. It catalyses the reaction GTP + H2O = GDP + phosphate + H(+). Its function is as follows. Tubulin is the major constituent of microtubules, a cylinder consisting of laterally associated linear protofilaments composed of alpha- and beta-tubulin heterodimers. Microtubules grow by the addition of GTP-tubulin dimers to the microtubule end, where a stabilizing cap forms. Below the cap, tubulin dimers are in GDP-bound state, owing to GTPase activity of alpha-tubulin. The polypeptide is Tubulin alpha-1 chain (TUBA1) (Pisum sativum (Garden pea)).